A 445-amino-acid chain; its full sequence is Cryptochrome DASH (445 aa).

One can recognise a Photolyase/cryptochrome alpha/beta domain in the interval 4–137; the sequence is KIGLYWFTFD…VIVQHSVRSL (134 aa).

It belongs to the DNA photolyase class-1 family. FAD is required as a cofactor. It depends on (6R)-5,10-methylene-5,6,7,8-tetrahydrofolate as a cofactor.

May have a photoreceptor function. Binds DNA; probably functions as a transcriptional repressor. The protein is Cryptochrome DASH (cry) of Vibrio parahaemolyticus serotype O3:K6 (strain RIMD 2210633).